The following is a 488-amino-acid chain: Germacrene A hydroxylase (488 aa).

At 1 to 6 (MELSLT) the chain is on the cytoplasmic side. Residues 7–23 (TSIALATIVLILYKLAT) form a helical; Signal-anchor for type II membrane protein membrane-spanning segment. The Lumenal segment spans residues 24 to 488 (RPKSNKKRLP…KTELILVPSF (465 aa)). 2 N-linked (GlcNAc...) asparagine glycosylation sites follow: asparagine 260 and asparagine 379. Cysteine 432 lines the heme pocket.

It belongs to the cytochrome P450 family. The cofactor is heme.

It localises to the endoplasmic reticulum membrane. The protein resides in the microsome membrane. The enzyme catalyses (+)-(R)-germacrene A + 3 reduced [NADPH--hemoprotein reductase] + 3 O2 = germacra-1(10),4,11(13)-trien-12-oate + 3 oxidized [NADPH--hemoprotein reductase] + 4 H2O + 4 H(+). Its pathway is secondary metabolite biosynthesis; terpenoid biosynthesis. With respect to regulation, inhibited by cytochrome C, miconazole, aminobenzotriazole, metyrapone and clotrimazole. Involved in the biosynthesis of germacrene-derived sesquiterpene lactones. Catalyzes three consecutive oxidations of germacrene A to produce germacrene A acid. Could also catalyze the three-step oxidation of non-natural substrate amorphadiene to artemisinic acid. Can use beta-elemene as substrate. This is Germacrene A hydroxylase from Cichorium intybus (Chicory).